Here is a 319-residue protein sequence, read N- to C-terminus: Beta-ketoacyl-[acyl-carrier-protein] synthase III (319 aa).

Residues cysteine 115 and histidine 246 contribute to the active site. The tract at residues 247 to 251 (QANLR) is ACP-binding. The active site involves asparagine 276.

Belongs to the thiolase-like superfamily. FabH family. As to quaternary structure, homodimer.

It is found in the cytoplasm. The enzyme catalyses malonyl-[ACP] + acetyl-CoA + H(+) = 3-oxobutanoyl-[ACP] + CO2 + CoA. It participates in lipid metabolism; fatty acid biosynthesis. Its function is as follows. Catalyzes the condensation reaction of fatty acid synthesis by the addition to an acyl acceptor of two carbons from malonyl-ACP. Catalyzes the first condensation reaction which initiates fatty acid synthesis and may therefore play a role in governing the total rate of fatty acid production. Possesses both acetoacetyl-ACP synthase and acetyl transacylase activities. Its substrate specificity determines the biosynthesis of branched-chain and/or straight-chain of fatty acids. The sequence is that of Beta-ketoacyl-[acyl-carrier-protein] synthase III from Coxiella burnetii (strain CbuK_Q154) (Coxiella burnetii (strain Q154)).